The chain runs to 333 residues: Pantothenate synthetase (333 aa).

27–34 (MGALHEGH) lines the ATP pocket. The active-site Proton donor is the His-34. Residue Gln-61 participates in (R)-pantoate binding. Position 61 (Gln-61) interacts with beta-alanine. Residue 148 to 151 (GQKD) participates in ATP binding. Gln-154 lines the (R)-pantoate pocket. ATP contacts are provided by residues Val-177 and 185–188 (LSSR).

It belongs to the pantothenate synthetase family. Homodimer.

The protein resides in the cytoplasm. It catalyses the reaction (R)-pantoate + beta-alanine + ATP = (R)-pantothenate + AMP + diphosphate + H(+). It functions in the pathway cofactor biosynthesis; (R)-pantothenate biosynthesis; (R)-pantothenate from (R)-pantoate and beta-alanine: step 1/1. Functionally, catalyzes the condensation of pantoate with beta-alanine in an ATP-dependent reaction via a pantoyl-adenylate intermediate. The protein is Pantothenate synthetase of Streptomyces avermitilis (strain ATCC 31267 / DSM 46492 / JCM 5070 / NBRC 14893 / NCIMB 12804 / NRRL 8165 / MA-4680).